The chain runs to 217 residues: Peptide methionine sulfoxide reductase MsrA (217 aa).

Cys56 is an active-site residue.

Belongs to the MsrA Met sulfoxide reductase family.

The catalysed reaction is L-methionyl-[protein] + [thioredoxin]-disulfide + H2O = L-methionyl-(S)-S-oxide-[protein] + [thioredoxin]-dithiol. The enzyme catalyses [thioredoxin]-disulfide + L-methionine + H2O = L-methionine (S)-S-oxide + [thioredoxin]-dithiol. In terms of biological role, has an important function as a repair enzyme for proteins that have been inactivated by oxidation. Catalyzes the reversible oxidation-reduction of methionine sulfoxide in proteins to methionine. The sequence is that of Peptide methionine sulfoxide reductase MsrA from Corynebacterium glutamicum (strain ATCC 13032 / DSM 20300 / JCM 1318 / BCRC 11384 / CCUG 27702 / LMG 3730 / NBRC 12168 / NCIMB 10025 / NRRL B-2784 / 534).